Reading from the N-terminus, the 340-residue chain is Anthranilate phosphoribosyltransferase (340 aa).

5-phospho-alpha-D-ribose 1-diphosphate is bound by residues Gly-78, Gly-81–Asp-82, Thr-86, Asn-88–Thr-91, Lys-106–Ser-114, and Ser-118. Gly-78 serves as a coordination point for anthranilate. Ser-90 is a Mg(2+) binding site. Asn-109 is a binding site for anthranilate. An anthranilate-binding site is contributed by Arg-164. Mg(2+)-binding residues include Asp-223 and Glu-224.

It belongs to the anthranilate phosphoribosyltransferase family. In terms of assembly, homodimer. It depends on Mg(2+) as a cofactor.

It catalyses the reaction N-(5-phospho-beta-D-ribosyl)anthranilate + diphosphate = 5-phospho-alpha-D-ribose 1-diphosphate + anthranilate. It participates in amino-acid biosynthesis; L-tryptophan biosynthesis; L-tryptophan from chorismate: step 2/5. Functionally, catalyzes the transfer of the phosphoribosyl group of 5-phosphorylribose-1-pyrophosphate (PRPP) to anthranilate to yield N-(5'-phosphoribosyl)-anthranilate (PRA). The sequence is that of Anthranilate phosphoribosyltransferase from Bacillus pumilus (strain SAFR-032).